The chain runs to 73 residues: Large ribosomal subunit protein bL31 (73 aa).

The protein belongs to the bacterial ribosomal protein bL31 family. Type A subfamily. Part of the 50S ribosomal subunit.

Binds the 23S rRNA. The protein is Large ribosomal subunit protein bL31 of Agrobacterium fabrum (strain C58 / ATCC 33970) (Agrobacterium tumefaciens (strain C58)).